The chain runs to 706 residues: Amino-acid acetyltransferase, mitochondrial (706 aa).

2 disordered regions span residues 1 to 25 (MSSR…GAGD) and 367 to 403 (NPAN…PAKQ). The transit peptide at 1 to 35 (MSSRVLASRAAQPLKRHPTVVGAGDEAYPTPRRCF) directs the protein to the mitochondrion. Residues 367–388 (NPANNSQGESVVTNPISDSNAV) show a composition bias toward polar residues. Over residues 389–401 (SESASTEPTSTPA) the composition is skewed to low complexity. The N-acetyltransferase domain occupies 527-696 (TRPNMNLDDP…YEAVCRSIQP (170 aa)).

It belongs to the acetyltransferase family.

It is found in the mitochondrion. It catalyses the reaction L-glutamate + acetyl-CoA = N-acetyl-L-glutamate + CoA + H(+). It functions in the pathway amino-acid biosynthesis; L-arginine biosynthesis; N(2)-acetyl-L-ornithine from L-glutamate: step 1/4. Its function is as follows. N-acetylglutamate synthase involved in arginine biosynthesis. The sequence is that of Amino-acid acetyltransferase, mitochondrial (arg2) from Emericella nidulans (strain FGSC A4 / ATCC 38163 / CBS 112.46 / NRRL 194 / M139) (Aspergillus nidulans).